Here is a 481-residue protein sequence, read N- to C-terminus: Aspartyl/glutamyl-tRNA(Asn/Gln) amidotransferase subunit B (481 aa).

This sequence belongs to the GatB/GatE family. GatB subfamily. Heterotrimer of A, B and C subunits.

It carries out the reaction L-glutamyl-tRNA(Gln) + L-glutamine + ATP + H2O = L-glutaminyl-tRNA(Gln) + L-glutamate + ADP + phosphate + H(+). The enzyme catalyses L-aspartyl-tRNA(Asn) + L-glutamine + ATP + H2O = L-asparaginyl-tRNA(Asn) + L-glutamate + ADP + phosphate + 2 H(+). Functionally, allows the formation of correctly charged Asn-tRNA(Asn) or Gln-tRNA(Gln) through the transamidation of misacylated Asp-tRNA(Asn) or Glu-tRNA(Gln) in organisms which lack either or both of asparaginyl-tRNA or glutaminyl-tRNA synthetases. The reaction takes place in the presence of glutamine and ATP through an activated phospho-Asp-tRNA(Asn) or phospho-Glu-tRNA(Gln). The chain is Aspartyl/glutamyl-tRNA(Asn/Gln) amidotransferase subunit B from Prosthecochloris aestuarii (strain DSM 271 / SK 413).